A 566-amino-acid polypeptide reads, in one-letter code: Medium-chain fatty-acid--CoA ligase (566 aa).

231–242 (ILASERAYCARL) is a binding site for ATP.

It belongs to the ATP-dependent AMP-binding enzyme family. As to quaternary structure, homodimer. Mg(2+) serves as cofactor.

The protein localises to the cell membrane. It carries out the reaction hexanoate + ATP + CoA = hexanoyl-CoA + AMP + diphosphate. The enzyme catalyses octanoate + ATP + CoA = octanoyl-CoA + AMP + diphosphate. The catalysed reaction is dodecanoate + ATP + CoA = dodecanoyl-CoA + AMP + diphosphate. It participates in lipid metabolism; fatty acid beta-oxidation. Functionally, catalyzes the esterification, concomitant with transport, of exogenous fatty acids into metabolically active CoA thioesters for subsequent degradation or incorporation into phospholipids. Is maximally active on C6:0, C8:0 and C12:0 fatty acids, while has a low activity on C14-C18 chain length fatty acids. Is involved in the anaerobic beta-oxidative degradation of fatty acids, which allows anaerobic growth of E.coli on fatty acids as a sole carbon and energy source in the presence of nitrate or fumarate as a terminal electron acceptor. Can functionally replace FadD under anaerobic conditions. This Escherichia coli (strain K12) protein is Medium-chain fatty-acid--CoA ligase.